The sequence spans 498 residues: Glycerol kinase (498 aa).

T12 lines the ADP pocket. 3 residues coordinate ATP: T12, T13, and S14. T12 is a binding site for sn-glycerol 3-phosphate. R16 is an ADP binding site. Sn-glycerol 3-phosphate-binding residues include R82, E83, Y134, and D243. Glycerol-binding residues include R82, E83, Y134, D243, and Q244. 2 residues coordinate ADP: T265 and G308. ATP-binding residues include T265, G308, Q312, and G409. ADP contacts are provided by G409 and N413.

It belongs to the FGGY kinase family. In terms of assembly, homotetramer and homodimer (in equilibrium).

It catalyses the reaction glycerol + ATP = sn-glycerol 3-phosphate + ADP + H(+). Its pathway is polyol metabolism; glycerol degradation via glycerol kinase pathway; sn-glycerol 3-phosphate from glycerol: step 1/1. With respect to regulation, activated by phosphorylation and inhibited by fructose 1,6-bisphosphate (FBP). In terms of biological role, key enzyme in the regulation of glycerol uptake and metabolism. Catalyzes the phosphorylation of glycerol to yield sn-glycerol 3-phosphate. In Clostridium botulinum (strain Loch Maree / Type A3), this protein is Glycerol kinase.